Here is a 465-residue protein sequence, read N- to C-terminus: Alpha-2A adrenergic receptor (465 aa).

Over 1–48 (MFRQEQPLAEGSFAPMGSLQPDAGNSSWNGTEAPGGGTRATPYSLQVT) the chain is Extracellular. N-linked (GlcNAc...) asparagine glycosylation is found at Asn-25 and Asn-29. A helical membrane pass occupies residues 49–74 (LTLVCLAGLLMLFTVFGNVLVIIAVF). At 75–85 (TSRALKAPQNL) the chain is on the cytoplasmic side. The helical transmembrane segment at 86 to 111 (FLVSLASADILVATLVIPFSLANEVM) threads the bilayer. Topologically, residues 112–121 (GYWYFGKVWC) are extracellular. Cys-121 and Cys-203 form a disulfide bridge. The helical transmembrane segment at 122 to 144 (EIYLALDVLFCTSSIVHLCAISL) threads the bilayer. The Cytoplasmic segment spans residues 145–164 (DRYWSITQAIEYNLKRTPRR). The chain crosses the membrane as a helical span at residues 165–188 (IKAIIVTVWVISAVISFPPLISIE). Over 189–207 (KKGAGGGQQPAEPSCKIND) the chain is Extracellular. The helical transmembrane segment at 208-232 (QKWYVISSSIGSFFAPCLIMILVYV) threads the bilayer. Over 233–389 (RIYQIAKRRT…RQNREKRFTF (157 aa)) the chain is Cytoplasmic. The interval 242–377 (TRVPPSRRGP…RAGGAKASRW (136 aa)) is disordered. Positions 313–330 (SSEHAERPQGPGKPERGP) are enriched in basic and acidic residues. At Ser-346 the chain carries Phosphoserine. Residues 353–364 (GAAGPGASGSGQ) show a composition bias toward gly residues. Arg-368 bears the Omega-N-methylarginine mark. The helical transmembrane segment at 390–414 (VLAVVIGVFVVCWFPFFFTYTLIAV) threads the bilayer. Over 415–424 (GCPVPYQLFN) the chain is Extracellular. Residues 425–445 (FFFWFGYCNSSLNPVIYTIFN) form a helical membrane-spanning segment. Residues 446–465 (HDFRRAFKKILCRGDRKRIV) are Cytoplasmic-facing. Cys-457 carries S-palmitoyl cysteine lipidation.

The protein belongs to the G-protein coupled receptor 1 family. Adrenergic receptor subfamily. ADRA2A sub-subfamily. As to expression, expressed in brain.

Its subcellular location is the cell membrane. Functionally, alpha-2 adrenergic receptors mediate the catecholamine-induced inhibition of adenylate cyclase through the action of G proteins. This is Alpha-2A adrenergic receptor from Rattus norvegicus (Rat).